The following is a 112-amino-acid chain: Photosystem II reaction center Psb28 protein (112 aa).

It belongs to the Psb28 family. Part of the photosystem II complex.

Its subcellular location is the cellular thylakoid membrane. This Synechocystis sp. (strain ATCC 27184 / PCC 6803 / Kazusa) protein is Photosystem II reaction center Psb28 protein.